The chain runs to 179 residues: Peptidyl-tRNA hydrolase 2, mitochondrial (179 aa).

The helical transmembrane segment at 10–32 threads the bilayer; it reads YLTNPGALSLAAGVACGVCLGWG. Glycyl lysine isopeptide (Lys-Gly) (interchain with G-Cter in ubiquitin) cross-links involve residues Lys76, Lys81, Lys95, Lys106, Lys115, Lys171, and Lys177.

This sequence belongs to the PTH2 family. As to quaternary structure, monomer. Post-translationally, ubiquitinated by PRKN during mitophagy, leading to its degradation and enhancement of mitophagy. Deubiquitinated by USP30.

It localises to the mitochondrion outer membrane. It catalyses the reaction an N-acyl-L-alpha-aminoacyl-tRNA + H2O = an N-acyl-L-amino acid + a tRNA + H(+). Functionally, peptidyl-tRNA hydrolase which releases tRNAs from the ribosome during protein synthesis. Promotes caspase-independent apoptosis by regulating the function of two transcriptional regulators, AES and TLE1. The chain is Peptidyl-tRNA hydrolase 2, mitochondrial (PTRH2) from Bos taurus (Bovine).